An 82-amino-acid polypeptide reads, in one-letter code: ATP synthase subunit c, chloroplastic (82 aa).

2 consecutive transmembrane segments (helical) span residues 7-27 (AASV…PGIG) and 57-77 (LAFM…LLFA).

This sequence belongs to the ATPase C chain family. F-type ATPases have 2 components, F(1) - the catalytic core - and F(0) - the membrane proton channel. F(1) has five subunits: alpha(3), beta(3), gamma(1), delta(1), epsilon(1). F(0) has four main subunits: a(1), b(1), b'(1) and c(10-14). The alpha and beta chains form an alternating ring which encloses part of the gamma chain. F(1) is attached to F(0) by a central stalk formed by the gamma and epsilon chains, while a peripheral stalk is formed by the delta, b and b' chains.

The protein localises to the plastid. It localises to the chloroplast thylakoid membrane. Its function is as follows. F(1)F(0) ATP synthase produces ATP from ADP in the presence of a proton or sodium gradient. F-type ATPases consist of two structural domains, F(1) containing the extramembraneous catalytic core and F(0) containing the membrane proton channel, linked together by a central stalk and a peripheral stalk. During catalysis, ATP synthesis in the catalytic domain of F(1) is coupled via a rotary mechanism of the central stalk subunits to proton translocation. In terms of biological role, key component of the F(0) channel; it plays a direct role in translocation across the membrane. A homomeric c-ring of between 10-14 subunits forms the central stalk rotor element with the F(1) delta and epsilon subunits. This is ATP synthase subunit c, chloroplastic from Guillardia theta (Cryptophyte).